The chain runs to 248 residues: Probable transcriptional regulatory protein RHE_CH03475 (248 aa).

It belongs to the TACO1 family.

It localises to the cytoplasm. The sequence is that of Probable transcriptional regulatory protein RHE_CH03475 from Rhizobium etli (strain ATCC 51251 / DSM 11541 / JCM 21823 / NBRC 15573 / CFN 42).